Reading from the N-terminus, the 336-residue chain is Fructose-1,6-bisphosphatase class 1 (336 aa).

The Mg(2+) site is built by glutamate 90, aspartate 112, leucine 114, and aspartate 115. Residues 115–118 (DGSS), asparagine 211, and lysine 277 each bind substrate. Glutamate 283 is a binding site for Mg(2+).

Belongs to the FBPase class 1 family. As to quaternary structure, homotetramer. It depends on Mg(2+) as a cofactor.

It localises to the cytoplasm. The enzyme catalyses beta-D-fructose 1,6-bisphosphate + H2O = beta-D-fructose 6-phosphate + phosphate. It participates in carbohydrate biosynthesis; gluconeogenesis. The polypeptide is Fructose-1,6-bisphosphatase class 1 (Pseudomonas fluorescens (strain ATCC BAA-477 / NRRL B-23932 / Pf-5)).